We begin with the raw amino-acid sequence, 212 residues long: Protein GET1 (212 aa).

At 1 to 4 (MASL) the chain is on the lumenal side. The chain crosses the membrane as a helical span at residues 5 to 24 (LLFVLVIQIITYLINTIGAR). The Cytoplasmic portion of the chain corresponds to 25–110 (TIDSLLWLLY…SFDWTIKTVR (86 aa)). Residues 75 to 99 (AKLRRRHDKAMEEYDVKNKKLSALK) adopt a coiled-coil conformation. A helical transmembrane segment spans residues 111-131 (WVSTTGVTVILQFWFSKSPIF). Residues 132–155 (DLPRGWLPWQVEWILSFPRAPLGT) are Lumenal-facing. A helical transmembrane segment spans residues 156-172 (VSIQVWGGACGTVIALV). Residues 173–212 (GGAMGVAAPAFKKINQPRGEAQKMGTPRGSREQTPVRKTQ) lie on the Cytoplasmic side of the membrane. Residues 189–212 (PRGEAQKMGTPRGSREQTPVRKTQ) are disordered. Residues 201-212 (GSREQTPVRKTQ) show a composition bias toward basic and acidic residues.

Belongs to the WRB/GET1 family. In terms of assembly, interacts with GET3.

The protein localises to the endoplasmic reticulum membrane. Its function is as follows. Required for the post-translational delivery of tail-anchored (TA) proteins to the endoplasmic reticulum. Acts as a membrane receptor for soluble GET3, which recognizes and selectively binds the transmembrane domain of TA proteins in the cytosol. This is Protein GET1 from Arthroderma otae (strain ATCC MYA-4605 / CBS 113480) (Microsporum canis).